A 426-amino-acid polypeptide reads, in one-letter code: Inositol hexakisphosphate kinase 2 (426 aa).

ATP contacts are provided by residues 207-209 (ENL) and Asp-220. Substrate contacts are provided by residues Lys-222 and 236–243 (KAANQIRK). Position 383 (Asp-383) interacts with ATP. His-386 provides a ligand contact to substrate.

Belongs to the inositol phosphokinase (IPK) family.

The protein resides in the nucleus. It carries out the reaction 1D-myo-inositol hexakisphosphate + ATP = 5-diphospho-1D-myo-inositol 1,2,3,4,6-pentakisphosphate + ADP. The protein operates within phospholipid metabolism; phosphatidylinositol metabolism. With respect to regulation, inhibited by flavonoids, including myricetin, quercetin, luteolin, isorhamnetin, rhamnetin, kaempferol, diosmetin and apigenin. Its function is as follows. Converts inositol hexakisphosphate (InsP6) to diphosphoinositol pentakisphosphate (InsP7/PP-InsP5). The sequence is that of Inositol hexakisphosphate kinase 2 from Homo sapiens (Human).